We begin with the raw amino-acid sequence, 390 residues long: Protein TAB2 homolog, chloroplastic (390 aa).

A chloroplast-targeting transit peptide spans 1-69; the sequence is MTTATAIVAG…RSISSESSTE (69 aa). The tract at residues 16–85 is disordered; that stretch reads RRSLPLPNPP…IADEEVEAEN (70 aa). Positions 61-75 are enriched in low complexity; the sequence is SISSESSTEASAAAD.

The protein localises to the plastid. Its subcellular location is the chloroplast. Nuclear genome-encoded factor involved in the biogenesis of photosystem I (PSI). Required for the accumulation of PSI during plant development. Does not seem to be required for the translation of mRNAs of the PSI subunits. This Zea mays (Maize) protein is Protein TAB2 homolog, chloroplastic.